Here is a 31-residue protein sequence, read N- to C-terminus: Cytochrome b6-f complex subunit 6 (31 aa).

The helical transmembrane segment at 4-24 (ITSYFGFLLAALTITSALFIG) threads the bilayer.

It belongs to the PetL family. In terms of assembly, the 4 large subunits of the cytochrome b6-f complex are cytochrome b6, subunit IV (17 kDa polypeptide, PetD), cytochrome f and the Rieske protein, while the 4 small subunits are PetG, PetL, PetM and PetN. The complex functions as a dimer.

The protein localises to the plastid. It is found in the chloroplast thylakoid membrane. Component of the cytochrome b6-f complex, which mediates electron transfer between photosystem II (PSII) and photosystem I (PSI), cyclic electron flow around PSI, and state transitions. PetL is important for photoautotrophic growth as well as for electron transfer efficiency and stability of the cytochrome b6-f complex. The sequence is that of Cytochrome b6-f complex subunit 6 from Gossypium hirsutum (Upland cotton).